A 154-amino-acid chain; its full sequence is Myoglobin (154 aa).

Residues 2-148 (VLSDAEWQLV…FRKDIAAKYK (147 aa)) form the Globin domain. Serine 4 is modified (phosphoserine). Histidine 65 contributes to the nitrite binding site. O2 is bound at residue histidine 65. Threonine 68 carries the post-translational modification Phosphothreonine. Histidine 94 is a binding site for heme b.

It belongs to the globin family. Monomeric.

The protein resides in the cytoplasm. Its subcellular location is the sarcoplasm. It catalyses the reaction Fe(III)-heme b-[protein] + nitric oxide + H2O = Fe(II)-heme b-[protein] + nitrite + 2 H(+). It carries out the reaction H2O2 + AH2 = A + 2 H2O. Functionally, monomeric heme protein which primary function is to store oxygen and facilitate its diffusion within muscle tissues. Reversibly binds oxygen through a pentacoordinated heme iron and enables its timely and efficient release as needed during periods of heightened demand. Depending on the oxidative conditions of tissues and cells, and in addition to its ability to bind oxygen, it also has a nitrite reductase activity whereby it regulates the production of bioactive nitric oxide. Under stress conditions, like hypoxia and anoxia, it also protects cells against reactive oxygen species thanks to its pseudoperoxidase activity. This chain is Myoglobin (MB), found in Eschrichtius robustus (California gray whale).